Here is a 971-residue protein sequence, read N- to C-terminus: MTVKNETVDYSKTLYLPQTNFPMRAGLPQKELELMERWEKRGLYAQLRQQAKDRPLYTLHDGPPYANGHIHIGHALNKVLKDVIIRSFQMRGFNANYVPGWDCHGLPIEWKIEEKYRAQGKNKDDVPLNEFRQECRQFAQHWITVQSEEFKRLGVVGDFNRPYTTMAFHAEARIASELMKFALSDQIYRGSKPVMWSVVERTALAEAEIEYHDHESDVIWVKFPVLQADSKDLYDAYVVIWTTTPWTIPANRAVSYSSQISYSIYEVKSAENDFGPQVGEKLLFADALVMSCAEKAKLVLKRLRVISAKEFKTLVLSHPLKGLAGGYNNKIAMLDGSHVTESAGTGFVHTAPSHGREDFEIWNAYKPLLEQSGIDSSIPFPVDDAGFYTKDAPGFGPDRKGGAIRVIDDNGKMGDANKEVINALIKADRLFARGRLKHSYPHSWRSKKPIIFRNTPQWFISMDKDLGDGSTLRSRALKAISMTRFVPSSGQNRLASMIADRPDWVLSRQRAWGVPICIFANEDGVILKDERVNERILRAFEAEGADAWFAEGARERFLGERAHESWIQVVDILDVWFDSGASHSFVLEDRDDLNWPADVYFEGSDQHRGWFQSSLLESCGTRACSPYKAVITHGFTLDENGKKMSKSLGNTVVPQEIIKTFGADIFRLWVMTTDYWEDQRLGKQILQTNVDSYRKLRNAIRWMLGTLAHDEGEEISYCALPDLEKLILHRLSELDQLVNRAYDDFDFKKIMRALLDFSITELSAFYFDIRKDSLYCDPPSSKKRKASLQVVREIFERMVIWLAPMLPFTMEEAWLERYPESTSVHLEQFRPVPMEWQNESLAERWKKIRQVRKVVTGALELERADKRIGSSLEAAPIVFISNPVLREALENLDMAEICITSALTITQGVPPSDAFILSDVEGVGVYPRKALGTKCARSWRYTQDVGSDPTYPDVSARDAAALRELQVLGKI.

The 'HIGH' region motif lies at 64–74 (PYANGHIHIGH). Glu-602 lines the L-isoleucyl-5'-AMP pocket. The 'KMSKS' region signature appears at 643 to 647 (KMSKS). Residue Lys-646 participates in ATP binding.

This sequence belongs to the class-I aminoacyl-tRNA synthetase family. IleS type 1 subfamily. In terms of assembly, monomer.

It is found in the cytoplasm. The enzyme catalyses tRNA(Ile) + L-isoleucine + ATP = L-isoleucyl-tRNA(Ile) + AMP + diphosphate. Catalyzes the attachment of isoleucine to tRNA(Ile). As IleRS can inadvertently accommodate and process structurally similar amino acids such as valine, to avoid such errors it has two additional distinct tRNA(Ile)-dependent editing activities. One activity is designated as 'pretransfer' editing and involves the hydrolysis of activated Val-AMP. The other activity is designated 'posttransfer' editing and involves deacylation of mischarged Val-tRNA(Ile). In Bartonella henselae (strain ATCC 49882 / DSM 28221 / CCUG 30454 / Houston 1) (Rochalimaea henselae), this protein is Isoleucine--tRNA ligase.